We begin with the raw amino-acid sequence, 316 residues long: 4-hydroxy-3-methylbut-2-enyl diphosphate reductase (316 aa).

Cys-12 contributes to the [4Fe-4S] cluster binding site. Residues His-41 and His-74 each contribute to the (2E)-4-hydroxy-3-methylbut-2-enyl diphosphate site. The dimethylallyl diphosphate site is built by His-41 and His-74. His-41 and His-74 together coordinate isopentenyl diphosphate. Residue Cys-96 coordinates [4Fe-4S] cluster. His-124 contacts (2E)-4-hydroxy-3-methylbut-2-enyl diphosphate. His-124 contacts dimethylallyl diphosphate. Isopentenyl diphosphate is bound at residue His-124. Glu-126 (proton donor) is an active-site residue. Thr-167 lines the (2E)-4-hydroxy-3-methylbut-2-enyl diphosphate pocket. Residue Cys-197 coordinates [4Fe-4S] cluster. (2E)-4-hydroxy-3-methylbut-2-enyl diphosphate is bound by residues Ser-225, Ser-226, Asn-227, and Ser-269. Positions 225, 226, 227, and 269 each coordinate dimethylallyl diphosphate. Positions 225, 226, 227, and 269 each coordinate isopentenyl diphosphate.

Belongs to the IspH family. As to quaternary structure, homodimer. It depends on [4Fe-4S] cluster as a cofactor.

It carries out the reaction isopentenyl diphosphate + 2 oxidized [2Fe-2S]-[ferredoxin] + H2O = (2E)-4-hydroxy-3-methylbut-2-enyl diphosphate + 2 reduced [2Fe-2S]-[ferredoxin] + 2 H(+). The catalysed reaction is dimethylallyl diphosphate + 2 oxidized [2Fe-2S]-[ferredoxin] + H2O = (2E)-4-hydroxy-3-methylbut-2-enyl diphosphate + 2 reduced [2Fe-2S]-[ferredoxin] + 2 H(+). Its pathway is isoprenoid biosynthesis; dimethylallyl diphosphate biosynthesis; dimethylallyl diphosphate from (2E)-4-hydroxy-3-methylbutenyl diphosphate: step 1/1. It participates in isoprenoid biosynthesis; isopentenyl diphosphate biosynthesis via DXP pathway; isopentenyl diphosphate from 1-deoxy-D-xylulose 5-phosphate: step 6/6. Catalyzes the conversion of 1-hydroxy-2-methyl-2-(E)-butenyl 4-diphosphate (HMBPP) into a mixture of isopentenyl diphosphate (IPP) and dimethylallyl diphosphate (DMAPP). Acts in the terminal step of the DOXP/MEP pathway for isoprenoid precursor biosynthesis. This is 4-hydroxy-3-methylbut-2-enyl diphosphate reductase from Sodalis glossinidius (strain morsitans).